The chain runs to 709 residues: ATP-binding cassette sub-family F member 3 (709 aa).

Ala-2 is subject to N-acetylalanine. Over residues 129 to 143 (RLKAKQEKRSEKETL) the composition is skewed to basic and acidic residues. The disordered stretch occupies residues 129–171 (RLKAKQEKRSEKETLKTSSPLVLEEASASQAGSRKESRLESSG). 3 positions are modified to phosphoserine: Ser-155, Ser-157, and Ser-161. The span at 161-171 (SRKESRLESSG) shows a compositional bias: basic and acidic residues. ABC transporter domains follow at residues 178 to 424 (VRIE…LNQQ) and 492 to 707 (LQLD…RREG). Residue 210-217 (GRNGLGKT) coordinates ATP. Ser-283 is modified (phosphoserine). ATP is bound at residue 525–532 (GENGAGKS).

This sequence belongs to the ABC transporter superfamily. ABCF family. EF3 subfamily.

In terms of biological role, displays an antiviral effect against flaviviruses such as west Nile virus (WNV) in the presence of OAS1B. The polypeptide is ATP-binding cassette sub-family F member 3 (Abcf3) (Rattus norvegicus (Rat)).